A 521-amino-acid chain; its full sequence is MTIKTKAELLNKWKPLLEGEGLPEIANSKQAIIAKIFENQEKDFQTAPEYKDEKIAQAFGSFLTEAEIGGDHGYNATNIAAGQTSGAVTQIGPAVMGMVRRAIPNLIAFDICGVQPMNSPTGQVFALRAVYGKDPVAAGAKEAFHPMYGPDAMFSGQGAAKKFPALAASTQTTVGDIYTHFFQETGTVYLQASVQVTIDAGATDAAKLDAEIKKQMEAGALVEIAEGMATSIAELQEGFNGSTDNPWNEMGFRIDKQVIEAKSRQLKAAYSIELAQDLRAVHGMDADAELSGILATEIMLEINREVVDWINYSAQVGKSGMTLTPGSKAGVFDFQDPIDIRGARWAGESFKALLFQIDKEAVEIARQTGRGEGNFIIASRNVVNVLASVDTGISYAAQGLATGFSTDTTKSVFAGVLGGKYRVYIDQYAKQDYFTVGYKGPNEMDAGIYYAPYVALTPLRGSDPKNFQPVMGFKTRYGIGINPFAESAAQAPASRIQSGMPSILNSLGKNAYFRRVYVKGI.

The protein belongs to the Tevenvirinae major capsid protein family. As to quaternary structure, homohexamer. Interacts with the portal protein. Interacts with the capsid vertex protein that forms pentamers. Interacts with hoc; one hoc molecule associates with each capsid hexamer. Interacts with soc; this interaction reinforces the capsid structure. A total of 960 subunits of the major capsid protein forms the 160 hexamers. In terms of processing, a proteolytic cleavage by the prohead core protein protease gives rise to the mature major capsid protein during virus maturation.

The protein resides in the virion. Functionally, major capsid protein that self-associates to form hexamers, building most of the capsid in association with pentons made of the capsid vertex protein and one dodecamer of the portal protein. The major capsid protein self-associates to form 160 hexamers, building most of the T=13 laevo capsid. Folding of major capsid protein requires the assistance of two chaperones, the host chaperone groL acting with the phage encoded gp23-specific chaperone, gp31. The capsid also contains two nonessential outer capsid proteins, Hoc and Soc, which decorate the capsid surface. Through binding to adjacent gp23 subunits, Soc reinforces the capsid structure. In Escherichia coli (Bacteriophage T4), this protein is Major capsid protein (gp23).